A 505-amino-acid polypeptide reads, in one-letter code: 2,3-bisphosphoglycerate-independent phosphoglycerate mutase (505 aa).

Mn(2+) contacts are provided by Asp12 and Ser62. Catalysis depends on Ser62, which acts as the Phosphoserine intermediate. Substrate contacts are provided by residues His123, 153 to 154, Arg185, Arg191, 257 to 260, and Lys330; these read RD and RPDR. Mn(2+)-binding residues include Asp397, His401, Asp438, His439, and His456.

This sequence belongs to the BPG-independent phosphoglycerate mutase family. As to quaternary structure, monomer. Requires Mn(2+) as cofactor.

The catalysed reaction is (2R)-2-phosphoglycerate = (2R)-3-phosphoglycerate. It participates in carbohydrate degradation; glycolysis; pyruvate from D-glyceraldehyde 3-phosphate: step 3/5. Functionally, catalyzes the interconversion of 2-phosphoglycerate and 3-phosphoglycerate. This is 2,3-bisphosphoglycerate-independent phosphoglycerate mutase from Staphylococcus epidermidis (strain ATCC 35984 / DSM 28319 / BCRC 17069 / CCUG 31568 / BM 3577 / RP62A).